A 387-amino-acid chain; its full sequence is NADPH-dependent aldehyde reductase YqhD (387 aa).

Positions 38, 40, 68, 95, 96, 99, 138, 147, 149, 160, 179, and 182 each coordinate NADP(+). Zn(2+) contacts are provided by aspartate 194, histidine 198, histidine 267, and histidine 281.

Belongs to the iron-containing alcohol dehydrogenase family. Homodimer. The crystals contain two dimers in the asymmetric unit. The cofactor is Zn(2+).

The catalysed reaction is a primary alcohol + NADP(+) = an aldehyde + NADPH + H(+). It catalyses the reaction butan-1-ol + NADP(+) = butanal + NADPH + H(+). It carries out the reaction 1-propanol + NADP(+) = propanal + NADPH + H(+). The enzyme catalyses allyl alcohol + NADP(+) = acrolein + NADPH + H(+). Functionally, exhibits NADPH-dependent reductase activity for a broad range of short-chain aldehydes. Shows highest catalytic efficiency toward butanal, propanal and the highly toxic aldehydes acrolein and malondialdehyde (MDA), which are produced mainly during lipid peroxidation. Mediates resistance to reactive oxygen species (ROS) elicitors, such as paraquat and potassium tellurite, probably by protecting the cell against the toxic effects of reactive aldehydes derived from membrane lipid peroxidation. Also acts, with lower efficiency, on acetaldehyde, glyceraldehyde, glycolaldehyde, methylglyoxal, glyoxal and hydroxyacetone. Could be involved in glyoxal metabolism, by catalyzing the reduction of glyoxal to glycolaldehyde, and further to 1,2-ethandiol. Catalyzes the reduction of isobutyraldehyde (2-methylpropanal) to isobutanol, and probably contributes to the production of isobutanol. Can probably catalyze the reduction of glutaraldehyde, a widely used biocide, to 1,5-pentanediol, which is non-toxic. Overexpression of YqhD protects the cells against glutaraldehyde toxicity. Can catalyze in vitro the NADPH-dependent reduction of furfural, a natural product of lignocellulosic decomposition, to the less toxic product, furfuryl alcohol. However, it is unlikely that furfural is a physiological substrate. In contrast, Sulzenbacher et al. detected significant activities only in the presence of alcohol and NADP(+). They reported in vitro NADP(+)-dependent alcohol dehydrogenase (ADH) activity towards various alcohols, with a preference for alcohols longer than C(3), but the affinity for the substrates is poor, suggesting that these compounds are not the physiological substrates. Perez et al. did not detect dehydrogenase activity with short and medium chain alcohols such as methanol, ethanol, propanol, butanol or isopropanol. The sequence is that of NADPH-dependent aldehyde reductase YqhD (yqhD) from Escherichia coli (strain K12).